A 760-amino-acid chain; its full sequence is MGCRYAVLALAVAYFAGSIAANDSQIVAVKGPASIRFTPAIHVVRGRFLRAANTADERNEDRGINLKSMPGFEKIASLFTKKNTPGPLLSWFEKKKSPDYVFLKLKINKGKQQLFDHPDWNVWVQYTTSVVKSDPEEAMIAALRTHYTDDILSKLLESAKNVPKTSGLATKMQMEHWVASKTPSQMFQFLRLDKVRNGVLDDPTLSIWINYMKLYNSKPVNKKQQVTLVSMLTTHYKDRGVLDIIEAAKKVPKTAPAARQLEMEQIQFWLKNGKSPDELLTVLSLDKAGNQLLASPRFKFWSKYVDNYNRDFPDEATTVMATLRNQLGDEDITPILIAAGKVPSTEKAAAKLQAEQFKSWLRENEDPAKVFQLLKLDNSADDLLGSPQFKLWGKYVEDLNLKPEHNDLQVSIITILRKNYGDDVLGNMVLAGKKAPSTSFMARRLEDELYKGWIAAGSSPDGVFKHLKFDKAGENVIQSPLWGLYTKFLEHYYKSFPTPMMSALAKGYDGDALAKLLIAAEKIPTSNTLATKLQTGQIQRWLDDKDQPGKIFKALLLDDMADDILTSPLFNTWTRYLDEFNKKFPDEKVSMTDTFRTSLDDETLKSLLITAKELPDMKTLSTKLQTVQIERWLASKTSPEDAFAVLALNKAGGNVLSKPLLNTWAAYLESFNAKFPRSRVSMIDTFREFFGDKALLTTLAAAKEVESTKKVATSLQDSLLSKWVLAKKPPSGVAKLVGTDEAGAKLLKTYTTKYMERYGQ.

Residues 1-21 (MGCRYAVLALAVAYFAGSIAA) form the signal peptide. The short motif at 47–62 (RFLRAANTADERNEDR) is the RxLR-dEER element. The WY1 repeat unit spans residues 87-134 (PLLSWFEKKKSPDYVFLKLKINKGKQQLFDHPDWNVWVQYTTSVVKSD). The segment at 87-760 (PLLSWFEKKK…TTKYMERYGQ (674 aa)) is 7 X 93 AA tandem repeats. An LWY2 repeat occupies 135 to 221 (PEEAMIAALR…MKLYNSKPVN (87 aa)). Residues 222-312 (KKQQVTLVSM…KYVDNYNRDF (91 aa)) form an LWY3 repeat. The LWY4 repeat unit spans residues 313–403 (PDEATTVMAT…KYVEDLNLKP (91 aa)). Residues 404–496 (EHNDLQVSII…KFLEHYYKSF (93 aa)) form an LWY5 repeat. Residues 497-584 (PTPMMSALAK…RYLDEFNKKF (88 aa)) form an LWY6 repeat. One copy of the LWY7 repeat lies at 585-760 (PDEKVSMTDT…TTKYMERYGQ (176 aa)).

Belongs to the RxLR effector family. As to quaternary structure, interacts with host dsRNA-binding protein DRB4.

Its subcellular location is the secreted. It is found in the host cell. In terms of biological role, secreted effector that possesses RNA silencing suppression activity by inhibiting the biogenesis of small RNAs in the host plant to promote enhanced susceptibility of host to the pathogen during infection. Interferes with secondary siRNA production by associating with host dsRNA-binding protein DRB4. Inhibits the host salicylic acid pathway during infection. This Phytophthora infestans (strain T30-4) (Potato late blight agent) protein is RxLR effector protein PSR2.